We begin with the raw amino-acid sequence, 206 residues long: Ribosomal RNA large subunit methyltransferase E (206 aa).

5 residues coordinate S-adenosyl-L-methionine: Gly55, Trp57, Asp75, Asp91, and Asp116. The active-site Proton acceptor is the Lys156.

The protein belongs to the class I-like SAM-binding methyltransferase superfamily. RNA methyltransferase RlmE family.

It localises to the cytoplasm. The catalysed reaction is uridine(2552) in 23S rRNA + S-adenosyl-L-methionine = 2'-O-methyluridine(2552) in 23S rRNA + S-adenosyl-L-homocysteine + H(+). Functionally, specifically methylates the uridine in position 2552 of 23S rRNA at the 2'-O position of the ribose in the fully assembled 50S ribosomal subunit. The sequence is that of Ribosomal RNA large subunit methyltransferase E from Blochmanniella floridana.